The sequence spans 361 residues: D-alanine--D-alanine ligase (361 aa).

The region spanning 144–350 (KLCVSEAGIA…FPELCDRLLQ (207 aa)) is the ATP-grasp domain. ATP is bound at residue 177–232 (PETLIYPVFVKPAHLGSSVGISKVSVQGELPEALAHACNLDTKVLIEQAMHGKEIE). The Mg(2+) site is built by Asp-303, Glu-317, and Asn-319.

Belongs to the D-alanine--D-alanine ligase family. It depends on Mg(2+) as a cofactor. The cofactor is Mn(2+).

It localises to the cytoplasm. It carries out the reaction 2 D-alanine + ATP = D-alanyl-D-alanine + ADP + phosphate + H(+). It functions in the pathway cell wall biogenesis; peptidoglycan biosynthesis. In terms of biological role, cell wall formation. This chain is D-alanine--D-alanine ligase, found in Chlorobium phaeovibrioides (strain DSM 265 / 1930) (Prosthecochloris vibrioformis (strain DSM 265)).